The chain runs to 244 residues: Neurogenin-1 (244 aa).

Disordered regions lie at residues 1-27 (MPAP…SSFL) and 39-82 (LAST…ARVR). Positions 10 to 27 (SDLDCSSSNSSSDLSSFL) are enriched in low complexity. The region spanning 93 to 145 (SRRVKANDRERNRMHNLNAALDALRSVLPSFPDDTKLTKIETLRFAYNYIWAL) is the bHLH domain.

In terms of assembly, efficient DNA binding requires dimerization with another bHLH protein. As to expression, expression restricted to the embryonic nervous system.

The protein localises to the nucleus. In terms of biological role, acts as a transcriptional regulator. Involved in the initiation of neuronal differentiation. Activates transcription by binding to the E box (5'-CANNTG-3'). Associates with chromatin to enhancer regulatory elements in genes encoding key transcriptional regulators of neurogenesis. The sequence is that of Neurogenin-1 (Neurog1) from Mus musculus (Mouse).